Here is a 355-residue protein sequence, read N- to C-terminus: Uroporphyrinogen decarboxylase (355 aa).

Residues 27 to 31 (RQAGR), aspartate 77, tyrosine 154, threonine 209, and histidine 328 contribute to the substrate site.

Belongs to the uroporphyrinogen decarboxylase family. Homodimer.

It is found in the cytoplasm. It carries out the reaction uroporphyrinogen III + 4 H(+) = coproporphyrinogen III + 4 CO2. Its pathway is porphyrin-containing compound metabolism; protoporphyrin-IX biosynthesis; coproporphyrinogen-III from 5-aminolevulinate: step 4/4. In terms of biological role, catalyzes the decarboxylation of four acetate groups of uroporphyrinogen-III to yield coproporphyrinogen-III. This Colwellia psychrerythraea (strain 34H / ATCC BAA-681) (Vibrio psychroerythus) protein is Uroporphyrinogen decarboxylase.